Consider the following 141-residue polypeptide: SsrA-binding protein (141 aa).

Belongs to the SmpB family.

The protein localises to the cytoplasm. In terms of biological role, required for rescue of stalled ribosomes mediated by trans-translation. Binds to transfer-messenger RNA (tmRNA), required for stable association of tmRNA with ribosomes. tmRNA and SmpB together mimic tRNA shape, replacing the anticodon stem-loop with SmpB. tmRNA is encoded by the ssrA gene; the 2 termini fold to resemble tRNA(Ala) and it encodes a 'tag peptide', a short internal open reading frame. During trans-translation Ala-aminoacylated tmRNA acts like a tRNA, entering the A-site of stalled ribosomes, displacing the stalled mRNA. The ribosome then switches to translate the ORF on the tmRNA; the nascent peptide is terminated with the 'tag peptide' encoded by the tmRNA and targeted for degradation. The ribosome is freed to recommence translation, which seems to be the essential function of trans-translation. This is SsrA-binding protein from Ureaplasma parvum serovar 3 (strain ATCC 27815 / 27 / NCTC 11736).